A 556-amino-acid chain; its full sequence is MSKLIRRVVTVLALTSMASCFASGGIEAAVAESLITKIVASAETKPAPVPMTAKKVRLVRRNKQPVEQKSRGAFCDKEFYPCEEGRCQPVEAQQESCYGRLYSVKVNDDCNVEICQSVPEYATVGSPYPIEILAIGKKDCVDVVITQQLPCEAEFVSSDPETTPTSDGKLVWKIDRLGAGDKCKITVWVKPLKEGCCFTAATVCACPELRSYTKCGQPAICIKQEGPDCACLRCPVCYKIEVVNTGSAIARNVTVDNPVPDGYSHASGQRVLSFNLGDMRPGDKKVFTVEFCPQRRGQITNVATVTYCGGHKCSANVTTVVNEPCVQVNISGADWSYVCKPVEYSISVSNPGDLVLHDVVIQDTLPSGVTVLEAPGGEICCNKVVWRIKEMCPGETLQFKLVVKAQVPGRFTNQVAVTSESNCGTCTSCAETTTHWKGLAATHMCVLDTNDPICVGENTVYRICVTNRGSAEDTNVSLILKFSKELQPIASSGPTKGTISGNTVVFDALPKLGSKESVEFSVTLKGIAPGDARGEAILSSDTLTSPVSDTENTHVY.

A signal peptide spans 1-22; the sequence is MSKLIRRVVTVLALTSMASCFA. A propeptide spanning residues 23–40 is cleaved from the precursor; the sequence is SGGIEAAVAESLITKIVA.

As to quaternary structure, part of a disulfide cross-linked outer membrane complex (COMC) composed of the major outer membrane porin (MOMP), the small cysteine-rich protein (OmcA) and the large cysteine-rich periplasmic protein (OmcB).

It localises to the periplasm. Its function is as follows. In elementary bodies (EBs, the infectious stage, which is able to survive outside the host cell) provides the structural integrity of the outer envelope through disulfide cross-links with the small cysteine-rich protein and the major outer membrane porin. It has been described in publications as the Sarkosyl-insoluble COMC (Chlamydia outer membrane complex), and serves as the functional equivalent of peptidoglycan. The protein is Large cysteine-rich periplasmic protein OmcB (omcB) of Chlamydia pneumoniae (Chlamydophila pneumoniae).